We begin with the raw amino-acid sequence, 417 residues long: Methyltransferase/ribosomally synthesized cyclic peptide dendrothelin A precursor dbihMA (417 aa).

Positions 1 to 251 (MESSTQTKPG…GVSTFYIPPK (251 aa)) are methyltransferase domain. Residues Arg72, Tyr76, and Tyr98 contribute to the active site. S-adenosyl-L-methionine contacts are provided by Tyr98, His100, Val103, Ala130, Gln172, Ala213, Ser244, and Thr245. A clasp domain region spans residues 252–378 (ARKDINTDII…WAIRCAMKNM (127 aa)). Residues 379–399 (PSSLLEAASQSVEEASMNGFP) are precursor leader. Residues Val401 and Val403 each carry the N-methylvaline modification. Thr404 carries the post-translational modification N-methylthreonine. Gly405 carries the N-methylglycine modification. An N-methylisoleucine modification is found at Ile406. An N-methylvaline modification is found at Val407. An N-methylglycine modification is found at Gly408. Ile410 is modified (N-methylisoleucine). The residue at position 411 (Gly411) is an N-methylglycine. An N-methylvaline modification is found at Val413.

It in the N-terminal section; belongs to the precorrin methyltransferase family. Homodimer. DbiMA automethylates at Val-401, Val-403, Thr-404, Gly-405, Ile-406, Val-407, Gly-408, Ile-410, Gly-411 and Val-413 before being processed by the prolyloligopeptidase dbiP which likely forms a peptidyl ester upon removal of the follower propeptide, which then undergoes macrocyclization with the N-terminus of the modified core peptide. Peptide backbone alpha-N-methylations change the physicochemical properties of amide bonds to provide structural constraints and other favorable characteristics including biological membrane permeability to peptides.

Its pathway is mycotoxin biosynthesis. Its function is as follows. Fusion protein of the methyltransferase dbiM and the dendrothelin core peptide; part of the gene cluster that mediates the biosynthesis of dendrothelin A, a highly methylated cyclic dodecapeptide showing slight nematodicidal activity. Dendrothelin A derives from the C-terminus of the dbiMA protein, and it is the dbiMA protein that methylates its own C-terminus using S-adenosyl methionine (SAM). The C-terminus is subsequently cleaved off and macrocyclized by the prolyloligopeptidase dbiP to give the final product. In Dendrothele bispora (strain CBS 962.96), this protein is Methyltransferase/ribosomally synthesized cyclic peptide dendrothelin A precursor dbihMA.